The primary structure comprises 216 residues: ATP-dependent Clp protease proteolytic subunit (216 aa).

Residue Ser-101 is the Nucleophile of the active site. His-126 is a catalytic residue.

Belongs to the peptidase S14 family. In terms of assembly, component of the chloroplastic Clp protease core complex.

Its subcellular location is the plastid. It localises to the chloroplast stroma. The enzyme catalyses Hydrolysis of proteins to small peptides in the presence of ATP and magnesium. alpha-casein is the usual test substrate. In the absence of ATP, only oligopeptides shorter than five residues are hydrolyzed (such as succinyl-Leu-Tyr-|-NHMec, and Leu-Tyr-Leu-|-Tyr-Trp, in which cleavage of the -Tyr-|-Leu- and -Tyr-|-Trp bonds also occurs).. Its function is as follows. Cleaves peptides in various proteins in a process that requires ATP hydrolysis. Has a chymotrypsin-like activity. Plays a major role in the degradation of misfolded proteins. The chain is ATP-dependent Clp protease proteolytic subunit from Hordeum vulgare (Barley).